The following is a 258-amino-acid chain: Imidazole glycerol phosphate synthase subunit HisF (258 aa).

Residues D11 and D130 contribute to the active site.

It belongs to the HisA/HisF family. In terms of assembly, heterodimer of HisH and HisF.

It is found in the cytoplasm. The enzyme catalyses 5-[(5-phospho-1-deoxy-D-ribulos-1-ylimino)methylamino]-1-(5-phospho-beta-D-ribosyl)imidazole-4-carboxamide + L-glutamine = D-erythro-1-(imidazol-4-yl)glycerol 3-phosphate + 5-amino-1-(5-phospho-beta-D-ribosyl)imidazole-4-carboxamide + L-glutamate + H(+). It functions in the pathway amino-acid biosynthesis; L-histidine biosynthesis; L-histidine from 5-phospho-alpha-D-ribose 1-diphosphate: step 5/9. In terms of biological role, IGPS catalyzes the conversion of PRFAR and glutamine to IGP, AICAR and glutamate. The HisF subunit catalyzes the cyclization activity that produces IGP and AICAR from PRFAR using the ammonia provided by the HisH subunit. The sequence is that of Imidazole glycerol phosphate synthase subunit HisF from Enterobacter sp. (strain 638).